The sequence spans 392 residues: Obg-like ATPase 1 (392 aa).

The OBG-type G domain occupies 21 to 285; the sequence is LKTGIVGMPN…FTEEEAIEEC (265 aa). 30–35 contacts ATP; the sequence is NVGKST. Ser34 and Thr55 together coordinate Mg(2+). Met233 is a binding site for ATP. Residues 306 to 389 enclose the TGS domain; it reads NLINYFTCGE…ESGDIAHWKA (84 aa).

This sequence belongs to the TRAFAC class OBG-HflX-like GTPase superfamily. OBG GTPase family. YchF/OLA1 subfamily. Monomer. It depends on Mg(2+) as a cofactor.

It is found in the cytoplasm. Its subcellular location is the nucleus. Functionally, hydrolyzes ATP, and can also hydrolyze GTP with lower efficiency. Has lower affinity for GTP. Negatively regulates the G2/M transition in the cell cycle. In Schizosaccharomyces pombe (strain 972 / ATCC 24843) (Fission yeast), this protein is Obg-like ATPase 1.